Reading from the N-terminus, the 78-residue chain is Translation initiation factor IF-1 (78 aa).

The S1-like domain occupies 1–72; it reads MAKEAEMEFE…TRGRITYRKI (72 aa).

It belongs to the IF-1 family. In terms of assembly, component of the 30S ribosomal translation pre-initiation complex which assembles on the 30S ribosome in the order IF-2 and IF-3, IF-1 and N-formylmethionyl-tRNA(fMet); mRNA recruitment can occur at any time during PIC assembly.

The protein localises to the cytoplasm. One of the essential components for the initiation of protein synthesis. Stabilizes the binding of IF-2 and IF-3 on the 30S subunit to which N-formylmethionyl-tRNA(fMet) subsequently binds. Helps modulate mRNA selection, yielding the 30S pre-initiation complex (PIC). Upon addition of the 50S ribosomal subunit IF-1, IF-2 and IF-3 are released leaving the mature 70S translation initiation complex. This Mesoplasma florum (strain ATCC 33453 / NBRC 100688 / NCTC 11704 / L1) (Acholeplasma florum) protein is Translation initiation factor IF-1.